The following is a 129-amino-acid chain: Glycine cleavage system H protein (129 aa).

A Lipoyl-binding domain is found at 23–104 (TATIGITQHA…AYAAWLFRLK (82 aa)). Residue K64 is modified to N6-lipoyllysine.

Belongs to the GcvH family. The glycine cleavage system is composed of four proteins: P, T, L and H. It depends on (R)-lipoate as a cofactor.

The glycine cleavage system catalyzes the degradation of glycine. The H protein shuttles the methylamine group of glycine from the P protein to the T protein. This is Glycine cleavage system H protein from Nitrosospira multiformis (strain ATCC 25196 / NCIMB 11849 / C 71).